We begin with the raw amino-acid sequence, 376 residues long: Erythronate-4-phosphate dehydrogenase (376 aa).

The substrate site is built by Ser-45 and Thr-67. Residue Asp-147 participates in NAD(+) binding. Arg-209 is a catalytic residue. Asp-233 contacts NAD(+). The active site involves Glu-238. His-255 acts as the Proton donor in catalysis. Gly-258 is an NAD(+) binding site. Residue Tyr-259 coordinates substrate.

It belongs to the D-isomer specific 2-hydroxyacid dehydrogenase family. PdxB subfamily. Homodimer.

The protein localises to the cytoplasm. The catalysed reaction is 4-phospho-D-erythronate + NAD(+) = (R)-3-hydroxy-2-oxo-4-phosphooxybutanoate + NADH + H(+). The protein operates within cofactor biosynthesis; pyridoxine 5'-phosphate biosynthesis; pyridoxine 5'-phosphate from D-erythrose 4-phosphate: step 2/5. Functionally, catalyzes the oxidation of erythronate-4-phosphate to 3-hydroxy-2-oxo-4-phosphonooxybutanoate. This chain is Erythronate-4-phosphate dehydrogenase, found in Shewanella baltica (strain OS223).